Here is a 537-residue protein sequence, read N- to C-terminus: Cytochrome P450 734A5 (537 aa).

Residues 13–33 (GAAAVAVAAAAAWVAVYAAAA) traverse the membrane as a helical segment. Cysteine 480 contacts heme.

It belongs to the cytochrome P450 family. Heme is required as a cofactor. As to expression, exclusively expressed in roots.

It localises to the membrane. Cytochrome P450 probably involved in brassinosteroids (BRs) inactivation and regulation of BRs homeostasis. This is Cytochrome P450 734A5 (CYP734A5) from Oryza sativa subsp. japonica (Rice).